Reading from the N-terminus, the 286-residue chain is Puff II/9-2 protein (286 aa).

Positions 1–19 (MKQFIVLTVVLLAIQELQG) are cleaved as a signal peptide. The tract at residues 61–235 (IDGLKKENNI…EKDLNTLRCE (175 aa)) is helical. Asparagine 156 is a glycosylation site (N-linked (GlcNAc...) asparagine).

In Bradysia coprophila (Dark-winged fungus gnat), this protein is Puff II/9-2 protein (II/9-2).